Reading from the N-terminus, the 2609-residue chain is Beige protein homolog 1 (2609 aa).

Disordered stretches follow at residues 1654-1679 (DSKLEARSSGARRNRSFDTSVEAPVS) and 1691-1729 (ILPSQEETLHDAARSDSNNSMEDEEDDVDEEDKEDKNRT). Over residues 1711 to 1723 (MEDEEDDVDEEDK) the composition is skewed to acidic residues. The region spanning 1735–1870 (ESGDSIQDVY…NRDSLYQKLV (136 aa)) is the BEACH-type PH domain. The BEACH domain occupies 1907–2202 (ANALSFSTTH…QVFKKPHPQR (296 aa)). 5 WD repeats span residues 2249-2290 (KDEV…QPVM), 2294-2332 (LHSEKITHVVACDERTFLTASLDLTLRLWTLSTNKPIKA), 2340-2379 (GHRYRITCVTVCKAFSIIVSGDAGGNLIIWDLNRAEFVSS), 2429-2475 (NSDE…NAKL), and 2507-2546 (ATRQNIITITPNGQARGIFAGDDKGQVFSWMLPDTTSNVH). Residues 2550–2604 (DNTSELCSLCDSRFSLMEWRSQCRACGNSNVCSDCVSMLKDTNIKTCYECYRQMP) form an FYVE-type zinc finger.

Its subcellular location is the cytoplasm. It localises to the membrane. Its function is as follows. May be involved in protein sorting and cell wall formation. In Schizosaccharomyces pombe (strain 972 / ATCC 24843) (Fission yeast), this protein is Beige protein homolog 1 (lvs1).